The chain runs to 309 residues: Hydroxyacylglutathione hydrolase, mitochondrial (309 aa).

Residues 1–24 constitute a mitochondrion transit peptide; the sequence is MVLGRGSLCLRSLSVLGAACARRG. The residue at position 90 (lysine 90) is an N6-acetyllysine. 4 residues coordinate Zn(2+): histidine 103, histidine 105, aspartate 107, and histidine 108. Residue lysine 117 is modified to N6-acetyllysine. Zn(2+) contacts are provided by histidine 159 and aspartate 183. Residues 192–194 and 222–224 each bind substrate; these read KFY and HEY. Histidine 222 lines the Zn(2+) pocket. Lysine 230 is subject to N6-acetyllysine; alternate. Lysine 230 carries the N6-succinyllysine; alternate modification. Residue 298–301 participates in substrate binding; the sequence is RREK.

The protein belongs to the metallo-beta-lactamase superfamily. Glyoxalase II family. As to quaternary structure, monomer. The cofactor is Zn(2+). As to expression, strongly expressed in testis, skeletal muscle and heart. Weakly expressed in placenta, pancreas, spleen and peripheral blood leukocytes.

The protein localises to the mitochondrion matrix. It is found in the cytoplasm. It carries out the reaction an S-(2-hydroxyacyl)glutathione + H2O = a 2-hydroxy carboxylate + glutathione + H(+). It catalyses the reaction (R)-S-lactoylglutathione + H2O = (R)-lactate + glutathione + H(+). Its pathway is secondary metabolite metabolism; methylglyoxal degradation; (R)-lactate from methylglyoxal: step 2/2. Its function is as follows. Thiolesterase that catalyzes the hydrolysis of S-D-lactoyl-glutathione to form glutathione and D-lactic acid. This chain is Hydroxyacylglutathione hydrolase, mitochondrial (Hagh), found in Rattus norvegicus (Rat).